The following is a 237-amino-acid chain: Ribitol-5-phosphate cytidylyltransferase (237 aa).

Residues 7–10 (LAGG) and 80–86 (GEDRNET) contribute to the CTP site.

This sequence belongs to the IspD/TarI cytidylyltransferase family. TarI subfamily.

It carries out the reaction D-ribitol 5-phosphate + CTP + H(+) = CDP-L-ribitol + diphosphate. It functions in the pathway cell wall biogenesis; poly(ribitol phosphate) teichoic acid biosynthesis. Catalyzes the transfer of the cytidylyl group of CTP to D-ribitol 5-phosphate. In Listeria innocua serovar 6a (strain ATCC BAA-680 / CLIP 11262), this protein is Ribitol-5-phosphate cytidylyltransferase.